A 1038-amino-acid chain; its full sequence is DNA polymerase delta catalytic subunit (1038 aa).

The tract at residues 1–29 (MSHSIPITSSPPPALKKLKLPNGSEEPSE) is disordered. Cys-942, Cys-945, Cys-958, and Cys-961 together coordinate Zn(2+). A CysA-type zinc finger spans residues 942–961 (CVSCRTPLKKDNLGALCPNC). Positions 992, 995, 1005, and 1010 each coordinate [4Fe-4S] cluster. Positions 992-1010 (CQRCQGSLHQEVLCSNKDC) match the CysB motif motif.

It belongs to the DNA polymerase type-B family. In terms of assembly, heterodimer with subunits of 125 kDa and 50 kDa. The 125 kDa subunit contains the polymerase active site and most likely the active site for the 3'-5' exonuclease activity. [4Fe-4S] cluster serves as cofactor.

It is found in the nucleus. The enzyme catalyses DNA(n) + a 2'-deoxyribonucleoside 5'-triphosphate = DNA(n+1) + diphosphate. In terms of biological role, this polymerase possesses two enzymatic activities: DNA synthesis (polymerase) and an exonucleolytic activity that degrades single-stranded DNA in the 3'- to 5'-direction. The sequence is that of DNA polymerase delta catalytic subunit (POL3) from Candida albicans (Yeast).